The chain runs to 157 residues: Transcriptional regulator MraZ (157 aa).

2 SpoVT-AbrB domains span residues 7 to 54 (TYEC…PMKE) and 83 to 126 (VRII…DKDL).

The protein belongs to the MraZ family. In terms of assembly, forms oligomers.

The protein localises to the cytoplasm. It localises to the nucleoid. In Flavobacterium psychrophilum (strain ATCC 49511 / DSM 21280 / CIP 103535 / JIP02/86), this protein is Transcriptional regulator MraZ.